A 137-amino-acid chain; its full sequence is Large ribosomal subunit protein uL16c (137 aa).

The protein belongs to the universal ribosomal protein uL16 family. As to quaternary structure, part of the 50S ribosomal subunit.

The protein resides in the plastid. This is Large ribosomal subunit protein uL16c from Aneura mirabilis (Parasitic liverwort).